The chain runs to 380 residues: Crotonobetainyl-CoA reductase (380 aa).

It belongs to the acyl-CoA dehydrogenase family. In terms of assembly, homotetramer. Requires FAD as cofactor.

The protein localises to the cytoplasm. It catalyses the reaction 4-(trimethylamino)butanoyl-CoA + oxidized [electron-transfer flavoprotein] + H(+) = crotonobetainyl-CoA + reduced [electron-transfer flavoprotein]. It participates in amine and polyamine metabolism; carnitine metabolism. In terms of biological role, catalyzes the reduction of crotonobetainyl-CoA to gamma-butyrobetainyl-CoA. The polypeptide is Crotonobetainyl-CoA reductase (Shigella flexneri serotype 5b (strain 8401)).